A 956-amino-acid chain; its full sequence is Kinesin heavy chain isoform 5C (956 aa).

The region spanning 8–327 (SIKVMCRFRP…LMFGQRAKTI (320 aa)) is the Kinesin motor domain. Residues Q87, S89, S90, G91, K92, T93, H94, and K99 each coordinate ATP. The microtubule-binding stretch occupies residues 174-315 (VSSPEEVMDV…PSVFNEAETK (142 aa)). Residue T403 is modified to Phosphothreonine. A coiled-coil region spans residues 406–923 (VDGISAEKEK…RRAHSAQIAK (518 aa)). A globular region spans residues 859–956 (CELPKLEKRL…GSSNSTHYQK (98 aa)). The disordered stretch occupies residues 910–956 (KNMARRAHSAQIAKPIRPGHYPASSPTAVHAVRGGGGGSSNSTHYQK).

The protein belongs to the TRAFAC class myosin-kinesin ATPase superfamily. Kinesin family. Kinesin subfamily. Oligomer composed of two heavy chains and two light chains. Interacts with GRIP1. Interacts with KLC3 and TRAK1. Interacts with ZFYVE27.

The protein resides in the cytoplasm. The protein localises to the cytoskeleton. It localises to the cell projection. Its subcellular location is the dendrite. It carries out the reaction ATP + H2O = ADP + phosphate + H(+). Microtubule-associated force-producing protein that may play a role in organelle transport. Has ATPase activity. Involved in synaptic transmission. Mediates dendritic trafficking of mRNAs. Required for anterograde axonal transportation of MAPK8IP3/JIP3 which is essential for MAPK8IP3/JIP3 function in axon elongation. In Mus musculus (Mouse), this protein is Kinesin heavy chain isoform 5C (Kif5c).